A 311-amino-acid polypeptide reads, in one-letter code: Sulfate adenylyltransferase subunit 2 (311 aa).

The protein belongs to the PAPS reductase family. CysD subfamily. Heterodimer composed of CysD, the smaller subunit, and CysN.

It catalyses the reaction sulfate + ATP + H(+) = adenosine 5'-phosphosulfate + diphosphate. It participates in sulfur metabolism; hydrogen sulfide biosynthesis; sulfite from sulfate: step 1/3. In terms of biological role, with CysN forms the ATP sulfurylase (ATPS) that catalyzes the adenylation of sulfate producing adenosine 5'-phosphosulfate (APS) and diphosphate, the first enzymatic step in sulfur assimilation pathway. APS synthesis involves the formation of a high-energy phosphoric-sulfuric acid anhydride bond driven by GTP hydrolysis by CysN coupled to ATP hydrolysis by CysD. This Caulobacter vibrioides (strain ATCC 19089 / CIP 103742 / CB 15) (Caulobacter crescentus) protein is Sulfate adenylyltransferase subunit 2.